Here is a 150-residue protein sequence, read N- to C-terminus: Ribonuclease H (150 aa).

Residues 7-148 (ERPRVEIWTD…VDQLATRGRE (142 aa)) enclose the RNase H type-1 domain. 4 residues coordinate Mg(2+): D16, E54, D76, and D140.

Belongs to the RNase H family. Monomer. It depends on Mg(2+) as a cofactor.

The protein localises to the cytoplasm. The enzyme catalyses Endonucleolytic cleavage to 5'-phosphomonoester.. In terms of biological role, endonuclease that specifically degrades the RNA of RNA-DNA hybrids. This Gluconobacter oxydans (strain 621H) (Gluconobacter suboxydans) protein is Ribonuclease H.